A 340-amino-acid chain; its full sequence is Glycerol-3-phosphate dehydrogenase [NAD(P)+] (340 aa).

4 residues coordinate NADPH: Ser14, Phe15, Arg35, and Lys108. Sn-glycerol 3-phosphate is bound by residues Lys108 and Gly136. Residue Ala140 participates in NADPH binding. 5 residues coordinate sn-glycerol 3-phosphate: Lys191, Asp244, Ser254, Arg255, and Asn256. Catalysis depends on Lys191, which acts as the Proton acceptor. Arg255 contacts NADPH. Residues Val279 and Glu281 each contribute to the NADPH site.

The protein belongs to the NAD-dependent glycerol-3-phosphate dehydrogenase family.

Its subcellular location is the cytoplasm. The catalysed reaction is sn-glycerol 3-phosphate + NAD(+) = dihydroxyacetone phosphate + NADH + H(+). It catalyses the reaction sn-glycerol 3-phosphate + NADP(+) = dihydroxyacetone phosphate + NADPH + H(+). It participates in membrane lipid metabolism; glycerophospholipid metabolism. Its function is as follows. Catalyzes the reduction of the glycolytic intermediate dihydroxyacetone phosphate (DHAP) to sn-glycerol 3-phosphate (G3P), the key precursor for phospholipid synthesis. The polypeptide is Glycerol-3-phosphate dehydrogenase [NAD(P)+] (Azotobacter vinelandii (strain DJ / ATCC BAA-1303)).